The primary structure comprises 391 residues: Coproporphyrin III ferrochelatase (391 aa).

Positions 79 and 148 each coordinate Fe-coproporphyrin III. 2 residues coordinate Fe(2+): H211 and E305.

Belongs to the ferrochelatase family.

The protein localises to the cytoplasm. The catalysed reaction is Fe-coproporphyrin III + 2 H(+) = coproporphyrin III + Fe(2+). Its pathway is porphyrin-containing compound metabolism; protoheme biosynthesis. Its function is as follows. Involved in coproporphyrin-dependent heme b biosynthesis. Catalyzes the insertion of ferrous iron into coproporphyrin III to form Fe-coproporphyrin III. In Tropheryma whipplei (strain TW08/27) (Whipple's bacillus), this protein is Coproporphyrin III ferrochelatase.